A 392-amino-acid polypeptide reads, in one-letter code: uncharacterized protein (392 aa).

Belongs to the glycosyltransferase 2 family.

This is an uncharacterized protein from Bacillus subtilis (strain 168).